Consider the following 84-residue polypeptide: Putative movement protein (84 aa).

A helical transmembrane segment spans residues 15 to 35 (ALHGILVAFIAVLCLIGCLWA).

As to quaternary structure, interacts with the capsid protein (CP). Part of a MP-CP-viral DNA complex.

It is found in the host membrane. Functionally, involved in the viral transport within, and between cells. This chain is Putative movement protein, found in Miscanthus streak virus (isolate 91) (MiSV).